The primary structure comprises 336 residues: Casein kinase II subunit alpha (336 aa).

The Protein kinase domain maps to 37-322 (YQLVRKLGRG…AREAMAHPYF (286 aa)). Residues 43–51 (LGRGKYSEV) and Lys66 each bind ATP. The active-site Proton acceptor is Asp154.

The protein belongs to the protein kinase superfamily. Ser/Thr protein kinase family. CK2 subfamily. Tetramer of two alpha and two beta chains. Requires Mg(2+) as cofactor.

It is found in the nucleus. The protein localises to the nucleolus. It catalyses the reaction L-seryl-[protein] + ATP = O-phospho-L-seryl-[protein] + ADP + H(+). The catalysed reaction is L-threonyl-[protein] + ATP = O-phospho-L-threonyl-[protein] + ADP + H(+). In terms of biological role, casein kinases are operationally defined by their preferential utilization of acidic proteins such as caseins as substrates. The alpha chain contains the catalytic site. May participate in Wnt signaling. The polypeptide is Casein kinase II subunit alpha (CkIIalpha) (Drosophila melanogaster (Fruit fly)).